A 119-amino-acid polypeptide reads, in one-letter code: V-type proton ATPase subunit F (119 aa).

Belongs to the V-ATPase F subunit family. As to quaternary structure, V-ATPase is a heteromultimeric enzyme made up of two complexes: the ATP-hydrolytic V1 complex and the proton translocation V0 complex. The V1 complex consists of three catalytic AB heterodimers that form a heterohexamer, three peripheral stalks each consisting of EG heterodimers, one central rotor including subunits D and F, and the regulatory subunits C and H. The proton translocation complex V0 consists of the proton transport subunit a, a ring of proteolipid subunits c9c'', rotary subunit d, subunits e and f, and the accessory subunits ATP6AP1/Ac45 and ATP6AP2/PRR.

It is found in the cytoplasmic vesicle. The protein resides in the secretory vesicle. It localises to the synaptic vesicle membrane. Its subcellular location is the clathrin-coated vesicle membrane. Subunit of the V1 complex of vacuolar(H+)-ATPase (V-ATPase), a multisubunit enzyme composed of a peripheral complex (V1) that hydrolyzes ATP and a membrane integral complex (V0) that translocates protons. V-ATPase is responsible for acidifying and maintaining the pH of intracellular compartments and in some cell types, is targeted to the plasma membrane, where it is responsible for acidifying the extracellular environment. This is V-type proton ATPase subunit F (ATP6V1F) from Homo sapiens (Human).